Consider the following 283-residue polypeptide: Arsenite methyltransferase (283 aa).

The protein belongs to the methyltransferase superfamily. Arsenite methyltransferase family.

It carries out the reaction arsenic triglutathione + [thioredoxin]-dithiol + S-adenosyl-L-methionine + 2 H2O = methylarsonous acid + [thioredoxin]-disulfide + 3 glutathione + S-adenosyl-L-homocysteine + H(+). The enzyme catalyses arsenic triglutathione + 2 [thioredoxin]-dithiol + 2 S-adenosyl-L-methionine + H2O = dimethylarsinous acid + 2 [thioredoxin]-disulfide + 3 glutathione + 2 S-adenosyl-L-homocysteine + 2 H(+). The catalysed reaction is arsenic triglutathione + 3 [thioredoxin]-dithiol + 3 S-adenosyl-L-methionine = trimethylarsine + 3 [thioredoxin]-disulfide + 3 glutathione + 3 S-adenosyl-L-homocysteine + 3 H(+). Its function is as follows. Catalyzes the transfer of a methyl group from AdoMet to arsenite, producing methylated arsenicals. Involved in the conversion of As(III) to a number of di- and trimethylated species, with trimethylarsine as the end product. Reduces the arsenic toxicity in the cell and may contribute to the global arsenic cycling. This chain is Arsenite methyltransferase, found in Rhodopseudomonas palustris (strain ATCC BAA-98 / CGA009).